Here is a 454-residue protein sequence, read N- to C-terminus: Type II methyltransferase M.MvaI (454 aa).

It belongs to the N(4)/N(6)-methyltransferase family. N(4) subfamily.

The catalysed reaction is a 2'-deoxycytidine in DNA + S-adenosyl-L-methionine = an N(4)-methyl-2'-deoxycytidine in DNA + S-adenosyl-L-homocysteine + H(+). Functionally, an alpha subtype methylase, recognizes the double-stranded sequence 5'-CCWGG-3', methylatES C-2 on both strands, and protects the DNA from cleavage by the MvaI endonuclease. This chain is Type II methyltransferase M.MvaI, found in Kocuria varians (Micrococcus varians).